The primary structure comprises 200 residues: Ribonuclease HII (200 aa).

The region spanning 1–200 is the RNase H type-2 domain; the sequence is MRYGGVDEAG…EINKKLTDFI (200 aa). Residues Asp-7, Glu-8, and Asp-99 each contribute to the a divalent metal cation site.

This sequence belongs to the RNase HII family. The cofactor is Mn(2+). It depends on Mg(2+) as a cofactor.

The protein localises to the cytoplasm. It catalyses the reaction Endonucleolytic cleavage to 5'-phosphomonoester.. Its function is as follows. Endonuclease that specifically degrades the RNA of RNA-DNA hybrids. This chain is Ribonuclease HII, found in Nanoarchaeum equitans (strain Kin4-M).